Consider the following 705-residue polypeptide: Elongation factor G (705 aa).

The tr-type G domain occupies 8–290 (HRYRNIGIMA…GVIHLLPSPA (283 aa)). Residues 17-24 (AHIDAGKT), 88-92 (DTPGH), and 142-145 (NKMD) each bind GTP.

It belongs to the TRAFAC class translation factor GTPase superfamily. Classic translation factor GTPase family. EF-G/EF-2 subfamily.

The protein localises to the cytoplasm. In terms of biological role, catalyzes the GTP-dependent ribosomal translocation step during translation elongation. During this step, the ribosome changes from the pre-translocational (PRE) to the post-translocational (POST) state as the newly formed A-site-bound peptidyl-tRNA and P-site-bound deacylated tRNA move to the P and E sites, respectively. Catalyzes the coordinated movement of the two tRNA molecules, the mRNA and conformational changes in the ribosome. This Xylella fastidiosa (strain M23) protein is Elongation factor G.